The sequence spans 285 residues: Seipin (285 aa).

At 1–16 (MKINVSRPLQFLQWSS) the chain is on the cytoplasmic side. The chain crosses the membrane as a helical span at residues 17–37 (YIVVAFLIQLLIILPLSILIY). Over 38–244 (HDFYLRLLPA…GLRNLMLRKR (207 aa)) the chain is Lumenal. Residues 245–265 (FLSYIIGISIFHCIICVLFFI) traverse the membrane as a helical segment. Over 266–285 (TGCTAFIFVRKGQEKSKKHS) the chain is Cytoplasmic.

Belongs to the seipin family.

The protein localises to the endoplasmic reticulum membrane. In terms of biological role, involved in lipid metabolism and lipid droplet (LD) morphology, number, and size. Facilitates initiation of LD formation, and ensures that vectorial budding of LDs from the ER is directed towards the cytoplasm. The chain is Seipin from Saccharomyces cerevisiae (strain ATCC 204508 / S288c) (Baker's yeast).